The sequence spans 285 residues: ATP synthase gamma chain (285 aa).

This sequence belongs to the ATPase gamma chain family. As to quaternary structure, F-type ATPases have 2 components, CF(1) - the catalytic core - and CF(0) - the membrane proton channel. CF(1) has five subunits: alpha(3), beta(3), gamma(1), delta(1), epsilon(1). CF(0) has three main subunits: a, b and c.

It is found in the cell membrane. Produces ATP from ADP in the presence of a proton gradient across the membrane. The gamma chain is believed to be important in regulating ATPase activity and the flow of protons through the CF(0) complex. The polypeptide is ATP synthase gamma chain (Lysinibacillus sphaericus (strain C3-41)).